An 87-amino-acid polypeptide reads, in one-letter code: MTKVLCKKYNEELDAIPFQPLPGELGKKIHSEISNKAWQAWLAHQTILINEYRLNLIEPKAKEFLKEEMQKFLFENKEDKPEQFNEI.

This sequence belongs to the Fe(2+)-trafficking protein family.

In terms of biological role, could be a mediator in iron transactions between iron acquisition and iron-requiring processes, such as synthesis and/or repair of Fe-S clusters in biosynthetic enzymes. The protein is Probable Fe(2+)-trafficking protein of Francisella philomiragia subsp. philomiragia (strain ATCC 25017 / CCUG 19701 / FSC 153 / O#319-036).